A 326-amino-acid polypeptide reads, in one-letter code: Probable UDP-3-O-acyl-N-acetylglucosamine deacetylase 2, mitochondrial (326 aa).

A mitochondrion-targeting transit peptide spans 1 to 21; the sequence is MRLPVTVKATKPSFLVIWIRY. Zn(2+)-binding residues include histidine 109, histidine 281, and aspartate 285.

The protein belongs to the LpxC family. It depends on Zn(2+) as a cofactor.

It localises to the mitochondrion. The enzyme catalyses a UDP-3-O-[(3R)-3-hydroxyacyl]-N-acetyl-alpha-D-glucosamine + H2O = a UDP-3-O-[(3R)-3-hydroxyacyl]-alpha-D-glucosamine + acetate. Its pathway is glycolipid biosynthesis; lipid IV(A) biosynthesis; lipid IV(A) from (3R)-3-hydroxytetradecanoyl-[acyl-carrier-protein] and UDP-N-acetyl-alpha-D-glucosamine: step 2/6. Involved in the biosynthesis of lipid A, a phosphorylated glycolipid that in bacteria anchors the lipopolysaccharide to the outer membrane of the cell. Lipid A-like molecules in plants may serve as structural components of the outer membranes of mitochondria and/or chloroplasts, or may be involved in signal transduction or plant defense responses (Potential). The chain is Probable UDP-3-O-acyl-N-acetylglucosamine deacetylase 2, mitochondrial (LPXC2) from Arabidopsis thaliana (Mouse-ear cress).